Consider the following 154-residue polypeptide: GTP-dependent dephospho-CoA kinase (154 aa).

The GTP site is built by Asp-34, Asp-53, and Glu-107.

This sequence belongs to the GTP-dependent DPCK family.

The catalysed reaction is 3'-dephospho-CoA + GTP = GDP + CoA + H(+). Its pathway is cofactor biosynthesis; coenzyme A biosynthesis. Functionally, catalyzes the GTP-dependent phosphorylation of the 3'-hydroxyl group of dephosphocoenzyme A to form coenzyme A (CoA). The polypeptide is GTP-dependent dephospho-CoA kinase (Nitrosopumilus maritimus (strain SCM1)).